The chain runs to 551 residues: Cleavage and polyadenylation specificity factor subunit 6 (551 aa).

Residues 1-213 (MADGVDHIDI…RGRFPGAVPG (213 aa)) are necessary for interaction with NXF1. Positions 81–161 (IALYIGNLTW…QNPVVTPCNK (81 aa)) constitute an RRM domain. Residues 81–161 (IALYIGNLTW…QNPVVTPCNK (81 aa)) form a necessary for interaction with NUDT21/CPSF5 region. A necessary for nuclear paraspeckles localization region spans residues 81-161 (IALYIGNLTW…QNPVVTPCNK (81 aa)). Position 157 is a phosphothreonine (Thr-157). Over residues 169–180 (MQSRKTTQSGQM) the composition is skewed to polar residues. 2 disordered regions span residues 169 to 411 (MQSR…PLSE) and 477 to 551 (LHGI…YRHR). The GAR signature appears at 202 to 206 (RGRGR). Positions 207–219 (FPGAVPGGDRFPG) are enriched in low complexity. Composition is skewed to pro residues over residues 220 to 265 (PAGP…PLAG), 285 to 366 (GQPP…PPPT), and 377 to 388 (GPPPTDPYGRPP). A (Microbial infection) Binds to HIV-1 capsid protein p24 (CA) region spans residues 358–551 (NPAFFPPPTN…RDREREYRHR (194 aa)). The span at 389-404 (PYDRGDYGPPGREMDT) shows a compositional bias: basic and acidic residues. A phosphothreonine mark is found at Thr-404 and Thr-407. The sufficient for nuclear speckle localization stretch occupies residues 404–551 (TARTPLSEAE…RDREREYRHR (148 aa)). The tract at residues 405–551 (ARTPLSEAEF…RDREREYRHR (147 aa)) is necessary for RNA-binding. Positions 481 to 551 (ESKSYGSGSR…RDREREYRHR (71 aa)) are necessary for interaction with SRSF3, SRSF7 and TRA2B/SFRS10. Positions 489-503 (SRRERSRERDHSRSR) are enriched in basic and acidic residues. Positions 490 to 551 (RRERSRERDH…RDREREYRHR (62 aa)) are arg/Ser-rich domain. 5 positions are modified to phosphoserine: Ser-494, Ser-500, Ser-511, Ser-513, and Ser-525. A compositionally biased stretch (basic residues) spans 504 to 514 (EKSRRHKSRSR). The sufficient for nuclear targeting stretch occupies residues 510–551 (KSRSRDRHDDYYRERSRERERHRDRDRDRDRERDREREYRHR). Over residues 515–551 (DRHDDYYRERSRERERHRDRDRDRDRERDREREYRHR) the composition is skewed to basic and acidic residues.

Belongs to the RRM CPSF6/7 family. Component of the cleavage factor Im (CFIm) complex which is a heterotetramer composed of two subunits of NUDT21/CPSF5 and two subunits of CPSF6 or CPSF7 or a heterodimer of CPSF6 and CPSF7. The cleavage factor Im (CFIm) complex associates with the CPSF and CSTF complexes to promote the assembly of the core mRNA 3'-processing machinery. Associates with the exon junction complex (EJC). Associates with the 80S ribosome particle. Interacts (via the RRM domain) with NUDT21/CPSF5; this interaction is direct and enhances binding to RNA. Interacts (via Arg/Ser-rich domain) with FIP1L1 (preferentially via unphosphorylated form and Arg/Glu/Asp-rich domain); this interaction mediates, at least in part, the interaction between the CFIm and CPSF complexes and may be inhibited by CPSF6 hyper-phosphorylation. Interacts (via N-terminus) with NXF1; this interaction is direct. Interacts with SRSF3. Interacts with SRSF7. Interacts with SNRNP70. Interacts with TRA2B/SFRS10. Interacts with UPF1. Interacts with UPF3B. Interacts with VIRMA. Interacts (via Arg/Ser-rich domain) with TNPO3; promoting nuclear import of CPSF6 independently of its phosphorylation status. Interacts with YTHDC1. In terms of assembly, (Microbial infection) Interacts (via C-terminus) with HIV-1 capsid protein p24 (CA). In terms of processing, phosphorylated. Phosphorylated in the Arg/Ser-rich domain by SRPK1, in vitro. Symmetrically dimethylated on arginine residues in the GAR motif by PRMT5 in a WDR77- and CLNS1A-dependent manner. Asymmetrically dimethylated on arginine residues in the GAR motif by PRMT1.

It localises to the nucleus. The protein resides in the nucleoplasm. Its subcellular location is the nucleus speckle. The protein localises to the cytoplasm. Its function is as follows. Component of the cleavage factor Im (CFIm) complex that functions as an activator of the pre-mRNA 3'-end cleavage and polyadenylation processing required for the maturation of pre-mRNA into functional mRNAs. CFIm contributes to the recruitment of multiprotein complexes on specific sequences on the pre-mRNA 3'-end, so called cleavage and polyadenylation signals (pA signals). Most pre-mRNAs contain multiple pA signals, resulting in alternative cleavage and polyadenylation (APA) producing mRNAs with variable 3'-end formation. The CFIm complex acts as a key regulator of cleavage and polyadenylation site choice during APA through its binding to 5'-UGUA-3' elements localized in the 3'-untranslated region (UTR) for a huge number of pre-mRNAs. CPSF6 enhances NUDT21/CPSF5 binding to 5'-UGUA-3' elements localized upstream of pA signals and promotes RNA looping, and hence activates directly the mRNA 3'-processing machinery. Plays a role in mRNA export. In terms of biological role, (Microbial infection) Binds HIV-1 capsid-nucleocapsid (HIV-1 CA-NC) complexes and might thereby promote the integration of the virus in the nucleus of dividing cells (in vitro). In Homo sapiens (Human), this protein is Cleavage and polyadenylation specificity factor subunit 6.